A 418-amino-acid polypeptide reads, in one-letter code: Bifunctional enzyme IspD/IspF (418 aa).

Residues 1–261 are 2-C-methyl-D-erythritol 4-phosphate cytidylyltransferase; it reads MADTPALIPQ…EFKRASDMNF (261 aa). The segment at 262-418 is 2-C-methyl-D-erythritol 2,4-cyclodiphosphate synthase; it reads RIGEGWDIHA…RATVLLRKFI (157 aa). A divalent metal cation contacts are provided by aspartate 268 and histidine 270. 4-CDP-2-C-methyl-D-erythritol 2-phosphate-binding positions include 268 to 270 and 294 to 295; these read DIH and HS. Histidine 302 is an a divalent metal cation binding site. Residues 316-318 and 321-325 each bind 4-CDP-2-C-methyl-D-erythritol 2-phosphate; these read DIG and FPDTD.

It in the N-terminal section; belongs to the IspD/TarI cytidylyltransferase family. IspD subfamily. In the C-terminal section; belongs to the IspF family. A divalent metal cation serves as cofactor.

The enzyme catalyses 2-C-methyl-D-erythritol 4-phosphate + CTP + H(+) = 4-CDP-2-C-methyl-D-erythritol + diphosphate. It carries out the reaction 4-CDP-2-C-methyl-D-erythritol 2-phosphate = 2-C-methyl-D-erythritol 2,4-cyclic diphosphate + CMP. Its pathway is isoprenoid biosynthesis; isopentenyl diphosphate biosynthesis via DXP pathway; isopentenyl diphosphate from 1-deoxy-D-xylulose 5-phosphate: step 2/6. It participates in isoprenoid biosynthesis; isopentenyl diphosphate biosynthesis via DXP pathway; isopentenyl diphosphate from 1-deoxy-D-xylulose 5-phosphate: step 4/6. In terms of biological role, bifunctional enzyme that catalyzes the formation of 4-diphosphocytidyl-2-C-methyl-D-erythritol from CTP and 2-C-methyl-D-erythritol 4-phosphate (MEP) (IspD), and catalyzes the conversion of 4-diphosphocytidyl-2-C-methyl-D-erythritol 2-phosphate (CDP-ME2P) to 2-C-methyl-D-erythritol 2,4-cyclodiphosphate (ME-CPP) with a corresponding release of cytidine 5-monophosphate (CMP) (IspF). The polypeptide is Bifunctional enzyme IspD/IspF (Albidiferax ferrireducens (strain ATCC BAA-621 / DSM 15236 / T118) (Rhodoferax ferrireducens)).